Consider the following 163-residue polypeptide: Transcriptional repressor NrdR (163 aa).

Positions 1–22 (MRCPKCQSLKSSVIDSRQAEDG) are disordered. Residues 3–34 (CPKCQSLKSSVIDSRQAEDGNTIRRRRSCDQC) fold into a zinc finger. Positions 49-139 (LVVVKKDGTR…VYRSFKDVGE (91 aa)) constitute an ATP-cone domain.

Belongs to the NrdR family. Zn(2+) serves as cofactor.

In terms of biological role, negatively regulates transcription of bacterial ribonucleotide reductase nrd genes and operons by binding to NrdR-boxes. The chain is Transcriptional repressor NrdR from Streptococcus suis (strain 98HAH33).